Reading from the N-terminus, the 462-residue chain is tRNA-2-methylthio-N(6)-dimethylallyladenosine synthase (462 aa).

An MTTase N-terminal domain is found at 2–117; that stretch reads KRYFIHTFGC…LPDIIGRVSA (116 aa). [4Fe-4S] cluster contacts are provided by C11, C47, C80, C157, C161, and C164. A Radical SAM core domain is found at 143–372; sequence SRGKVTEFVT…QKLQRRISGE (230 aa). One can recognise a TRAM domain in the interval 375–437; the sequence is AALVGSEVEV…PNQLAGKQVA (63 aa).

The protein belongs to the methylthiotransferase family. MiaB subfamily. As to quaternary structure, monomer. [4Fe-4S] cluster serves as cofactor.

The protein resides in the cytoplasm. The enzyme catalyses N(6)-dimethylallyladenosine(37) in tRNA + (sulfur carrier)-SH + AH2 + 2 S-adenosyl-L-methionine = 2-methylsulfanyl-N(6)-dimethylallyladenosine(37) in tRNA + (sulfur carrier)-H + 5'-deoxyadenosine + L-methionine + A + S-adenosyl-L-homocysteine + 2 H(+). In terms of biological role, catalyzes the methylthiolation of N6-(dimethylallyl)adenosine (i(6)A), leading to the formation of 2-methylthio-N6-(dimethylallyl)adenosine (ms(2)i(6)A) at position 37 in tRNAs that read codons beginning with uridine. This Myxococcus xanthus (strain DK1622) protein is tRNA-2-methylthio-N(6)-dimethylallyladenosine synthase.